Reading from the N-terminus, the 202-residue chain is Holliday junction branch migration complex subunit RuvA (202 aa).

Positions 1-64 (MIGRLRGSLA…EDAHLLYGFY (64 aa)) are domain I. Residues 65 to 143 (EKRERELFRE…AWEALPGTFT (79 aa)) are domain II. The flexible linker stretch occupies residues 144–153 (LVSNGPNQAE). A domain III region spans residues 154-202 (PVASAESDAVSALISLGYKPQEASKAVSAIKEKDLSSADLIRRALKGMG).

This sequence belongs to the RuvA family. As to quaternary structure, homotetramer. Forms an RuvA(8)-RuvB(12)-Holliday junction (HJ) complex. HJ DNA is sandwiched between 2 RuvA tetramers; dsDNA enters through RuvA and exits via RuvB. An RuvB hexamer assembles on each DNA strand where it exits the tetramer. Each RuvB hexamer is contacted by two RuvA subunits (via domain III) on 2 adjacent RuvB subunits; this complex drives branch migration. In the full resolvosome a probable DNA-RuvA(4)-RuvB(12)-RuvC(2) complex forms which resolves the HJ.

The protein localises to the cytoplasm. In terms of biological role, the RuvA-RuvB-RuvC complex processes Holliday junction (HJ) DNA during genetic recombination and DNA repair, while the RuvA-RuvB complex plays an important role in the rescue of blocked DNA replication forks via replication fork reversal (RFR). RuvA specifically binds to HJ cruciform DNA, conferring on it an open structure. The RuvB hexamer acts as an ATP-dependent pump, pulling dsDNA into and through the RuvAB complex. HJ branch migration allows RuvC to scan DNA until it finds its consensus sequence, where it cleaves and resolves the cruciform DNA. This is Holliday junction branch migration complex subunit RuvA from Pseudomonas syringae pv. syringae (strain B728a).